Reading from the N-terminus, the 665-residue chain is ELMO family protein LMO1 (665 aa).

As to quaternary structure, forms an active heterodimer with DCK1.

It is found in the cytoplasm. It localises to the mitochondrion. Forms a transiant heterodimeric complex with DCK1, that acts as a guanine nucleotide exchange factor (GEF) for the small GTPase RHO5. DCK1, LMO1 and RHO5 relocate to mitochondria upon oxidative stress and trigger cell death. The DCK1/LMO1/RHO5 signaling module mediates mitochondrial turnover under nitrogen starvation conditions via mitophagy. The DCK1/LMO1/RHO5 signaling module also plays a role in cell wall integrity signaling. The polypeptide is ELMO family protein LMO1 (Saccharomyces cerevisiae (strain ATCC 204508 / S288c) (Baker's yeast)).